We begin with the raw amino-acid sequence, 382 residues long: Polyadenylate-binding protein 5 (382 aa).

RRM domains follow at residues 18 to 96, 106 to 182, 199 to 276, and 302 to 378; these read AALY…WSQP, GNIF…RFKF, TNVF…RAQK, and VPIY…LGQA.

It localises to the cytoplasm. Binds the poly(A) tail of mRNA. May be involved in cytoplasmic regulatory processes of mRNA metabolism. Can probably bind to cytoplasmic RNA sequences other than poly(A) in vivo. The sequence is that of Polyadenylate-binding protein 5 (PABPC5) from Macaca mulatta (Rhesus macaque).